The chain runs to 457 residues: Aromatic amino acid transport protein AroP (457 aa).

At 1 to 19 (MMEGQQHGEQLKRGLKNRH) the chain is on the cytoplasmic side. Residues 20–40 (IQLIALGGAIGTGLFLGSASV) form a helical membrane-spanning segment. Residues 41 to 42 (IQ) are Periplasmic-facing. Residues 43-63 (SAGPGIILGYAIAGFIAFLIM) form a helical membrane-spanning segment. At 64-86 (RQLGEMVVEEPVAGSFSHFAYKY) the chain is on the cytoplasmic side. A helical membrane pass occupies residues 87–107 (WGSFAGFASGWNYWVLYVLVA). Topologically, residues 108–117 (MAELTAVGKY) are periplasmic. The helical transmembrane segment at 118 to 138 (IQFWYPEIPTWVSAAVFFVVI) threads the bilayer. Over 139–155 (NAINLTNVTVFGEMEFW) the chain is Cytoplasmic. A helical membrane pass occupies residues 156-176 (FAIIKVIAVVAMIIFGGWLLF). Residues 177-201 (SGNGGPQASVSNLWDQGGFLPHGFT) are Periplasmic-facing. A helical transmembrane segment spans residues 202–222 (GLVMMMAIIMFSFGGLELVGI). Over 223–240 (TAAEADNPEQSIPKATNQ) the chain is Cytoplasmic. Residues 241-261 (VIYRILIFYIGSLAVLLSLMP) form a helical membrane-spanning segment. Residues 262–271 (WTRVTADTSP) lie on the Periplasmic side of the membrane. Residues 272–292 (FVLIFHELGDTFVANALNIVV) traverse the membrane as a helical segment. Topologically, residues 293-333 (LTAALSVYNSCVYCNSRMLFGLAQQGNAPKALASVDKRGVP) are cytoplasmic. A helical membrane pass occupies residues 334-354 (VNTILVSALVTALCVLINYLA). The Periplasmic portion of the chain corresponds to 355–358 (PESA). A helical membrane pass occupies residues 359–379 (FGLLMALVVSALVINWAMISL). Topologically, residues 380 to 407 (AHMKFRRAKQEQGVVTRFPALLYPLGNW) are cytoplasmic. A helical membrane pass occupies residues 408-428 (ICLLFMAVVLVIMLMTPGMAI). Position 429 (S429) is a topological domain, periplasmic. The helical transmembrane segment at 430–450 (VYLIPVWLVVLGIGYLFKEKT) threads the bilayer. The Cytoplasmic segment spans residues 451–457 (AKAVKAH).

It belongs to the amino acid-polyamine-organocation (APC) superfamily. Amino acid transporter (AAT) (TC 2.A.3.1) family.

Its subcellular location is the cell inner membrane. The enzyme catalyses L-phenylalanine(in) + H(+)(in) = L-phenylalanine(out) + H(+)(out). It catalyses the reaction L-tryptophan(in) + H(+)(in) = L-tryptophan(out) + H(+)(out). It carries out the reaction L-tyrosine(in) + H(+)(in) = L-tyrosine(out) + H(+)(out). Its function is as follows. Permease that is involved in the active transport across the cytoplasmic membrane of all three aromatic amino acids, phenylalanine, tyrosine and tryptophan. In Escherichia coli O157:H7, this protein is Aromatic amino acid transport protein AroP (aroP).